A 562-amino-acid polypeptide reads, in one-letter code: NAD-dependent malic enzyme (562 aa).

The active-site Proton donor is the Tyr101. Arg154 contributes to the NAD(+) binding site. The active-site Proton acceptor is Lys172. 3 residues coordinate a divalent metal cation: Glu243, Asp244, and Asp267. Residues Asp267 and Asn415 each coordinate NAD(+).

It belongs to the malic enzymes family. In terms of assembly, homotetramer. Mg(2+) serves as cofactor. The cofactor is Mn(2+).

The catalysed reaction is (S)-malate + NAD(+) = pyruvate + CO2 + NADH. It catalyses the reaction oxaloacetate + H(+) = pyruvate + CO2. This chain is NAD-dependent malic enzyme, found in Aliivibrio fischeri (strain ATCC 700601 / ES114) (Vibrio fischeri).